Here is a 350-residue protein sequence, read N- to C-terminus: Putative ATP-binding protein BruAb2_0487 (350 aa).

The ABC transporter domain occupies 4-234 (VSLRGISKTF…PANKFVAGFI (231 aa)). Residue 36–43 (GPSGCGKS) participates in ATP binding.

The protein belongs to the ABC transporter superfamily. As to quaternary structure, the complex is composed of two ATP-binding proteins (BruAb2_0487), two transmembrane proteins (BruAb2_0483) and a solute-binding protein (BruAb2_0484).

The protein localises to the cell inner membrane. In terms of biological role, probably part of an ABC transporter complex. Probably responsible for energy coupling to the transport system. The chain is Putative ATP-binding protein BruAb2_0487 from Brucella abortus biovar 1 (strain 9-941).